The chain runs to 362 residues: Protein ABHD12B (362 aa).

The protein belongs to the serine esterase family.

The protein is Protein ABHD12B of Homo sapiens (Human).